We begin with the raw amino-acid sequence, 112 residues long: Putative pterin-4-alpha-carbinolamine dehydratase (112 aa).

The protein belongs to the pterin-4-alpha-carbinolamine dehydratase family.

The enzyme catalyses (4aS,6R)-4a-hydroxy-L-erythro-5,6,7,8-tetrahydrobiopterin = (6R)-L-erythro-6,7-dihydrobiopterin + H2O. This chain is Putative pterin-4-alpha-carbinolamine dehydratase, found in Shewanella woodyi (strain ATCC 51908 / MS32).